Here is a 167-residue protein sequence, read N- to C-terminus: Urease accessory protein UreE (167 aa).

This sequence belongs to the UreE family.

The protein resides in the cytoplasm. Its function is as follows. Involved in urease metallocenter assembly. Binds nickel. Probably functions as a nickel donor during metallocenter assembly. This is Urease accessory protein UreE from Pseudomonas aeruginosa (strain UCBPP-PA14).